A 398-amino-acid polypeptide reads, in one-letter code: Carboxyaminopropylagmatine dehydrogenase (398 aa).

Belongs to the saccharopine dehydrogenase family.

The enzyme catalyses N(1)-[(S)-3-amino-3-carboxypropyl]agmatine + NADP(+) + H2O = L-aspartate 4-semialdehyde + agmatine + NADPH + H(+). Its pathway is amine and polyamine biosynthesis; spermidine biosynthesis. Dehydrogenase involved in the biosynthesis of spermidine via the carboxyaminopropylagmatine (CAPA) pathway. Catalyzes the reductive condensation of agmatine and L-aspartate-beta-semialdehyde (ASA) into CAPA. Shows activity toward putrescine and 1,3-diaminopropane, but the catalytic efficiency is three to four orders of magnitude lower than that for agmatine. Cannot use cadaverine or spermidine. In Synechocystis sp. (strain ATCC 27184 / PCC 6803 / Kazusa), this protein is Carboxyaminopropylagmatine dehydrogenase.